The chain runs to 389 residues: Protein Wnt-10b (389 aa).

Positions 1–28 are cleaved as a signal peptide; that stretch reads MLEEPRPRPPPSGLAGLLFLALCSRALS. A Phosphothreonine modification is found at threonine 46. 11 disulfides stabilise this stretch: cysteine 83-cysteine 94, cysteine 136-cysteine 144, cysteine 146-cysteine 199, cysteine 247-cysteine 261, cysteine 249-cysteine 256, cysteine 318-cysteine 349, cysteine 334-cysteine 344, cysteine 348-cysteine 388, cysteine 364-cysteine 379, cysteine 366-cysteine 376, and cysteine 371-cysteine 372. The N-linked (GlcNAc...) asparagine glycan is linked to asparagine 93. Residues 171–197 are disordered; that stretch reads KSFPHSLPSPGPGSSPSPGPQDTWEWG. The segment covering 177 to 189 has biased composition (pro residues); it reads LPSPGPGSSPSPG. The O-palmitoleoyl serine; by PORCN moiety is linked to residue serine 253. Residue asparagine 335 is glycosylated (N-linked (GlcNAc...) asparagine).

This sequence belongs to the Wnt family. In terms of assembly, forms a soluble 1:1 complex with AFM; this prevents oligomerization and is required for prolonged biological activity. The complex with AFM may represent the physiological form in body fluids. Post-translationally, palmitoleoylation is required for efficient binding to frizzled receptors. Depalmitoleoylation leads to Wnt signaling pathway inhibition. As to expression, detected in most adult tissues. Highest levels were found in heart and skeletal muscle. Low levels are found in brain.

The protein resides in the secreted. Its subcellular location is the extracellular space. It is found in the extracellular matrix. Member of the Wnt ligand gene family that encodes for secreted proteins, which activate the Wnt signaling cascade. Specifically activates canonical Wnt/beta-catenin signaling and thus triggers beta-catenin/LEF/TCF-mediated transcriptional programs. Involved in signaling networks controlling stemness, pluripotency and cell fate decisions. Acts in the immune system, mammary gland, adipose tissue, bone and skin. The sequence is that of Protein Wnt-10b (WNT10B) from Homo sapiens (Human).